Here is a 907-residue protein sequence, read N- to C-terminus: Translation initiation factor IF-2 (907 aa).

A disordered region spans residues aspartate 26 to aspartate 317. 2 stretches are compositionally biased toward basic and acidic residues: residues glycine 28 to lysine 44 and serine 101 to tyrosine 248. A compositionally biased stretch (basic residues) spans lysine 299 to lysine 308. The tr-type G domain occupies proline 406–threonine 575. Residues glycine 415–threonine 422 form a G1 region. Glycine 415–threonine 422 is a GTP binding site. The interval glycine 440 to histidine 444 is G2. The segment at aspartate 461–glycine 464 is G3. GTP-binding positions include aspartate 461 to histidine 465 and asparagine 515 to aspartate 518. The tract at residues asparagine 515–aspartate 518 is G4. Positions serine 551–lysine 553 are G5.

Belongs to the TRAFAC class translation factor GTPase superfamily. Classic translation factor GTPase family. IF-2 subfamily.

Its subcellular location is the cytoplasm. In terms of biological role, one of the essential components for the initiation of protein synthesis. Protects formylmethionyl-tRNA from spontaneous hydrolysis and promotes its binding to the 30S ribosomal subunits. Also involved in the hydrolysis of GTP during the formation of the 70S ribosomal complex. This Vibrio vulnificus (strain YJ016) protein is Translation initiation factor IF-2.